Here is a 452-residue protein sequence, read N- to C-terminus: D-inositol 3-phosphate glycosyltransferase (452 aa).

Residue His25 participates in 1D-myo-inositol 3-phosphate binding. Residues 31–32 (QP) and Gly39 each bind UDP-N-acetyl-alpha-D-glucosamine. 1D-myo-inositol 3-phosphate contacts are provided by residues 36–41 (DAGGMN), Lys94, Tyr127, Thr151, and Arg171. Residues Arg245, Lys250, and Gln309 each coordinate UDP-N-acetyl-alpha-D-glucosamine. Mg(2+) contacts are provided by Tyr318, Arg319, and Ser321. UDP-N-acetyl-alpha-D-glucosamine is bound by residues Glu331 and Glu339. Thr345 lines the Mg(2+) pocket.

The protein belongs to the glycosyltransferase group 1 family. MshA subfamily. As to quaternary structure, homodimer.

It carries out the reaction 1D-myo-inositol 3-phosphate + UDP-N-acetyl-alpha-D-glucosamine = 1D-myo-inositol 2-acetamido-2-deoxy-alpha-D-glucopyranoside 3-phosphate + UDP + H(+). Its function is as follows. Catalyzes the transfer of a N-acetyl-glucosamine moiety to 1D-myo-inositol 3-phosphate to produce 1D-myo-inositol 2-acetamido-2-deoxy-glucopyranoside 3-phosphate in the mycothiol biosynthesis pathway. The protein is D-inositol 3-phosphate glycosyltransferase of Rhodococcus jostii (strain RHA1).